We begin with the raw amino-acid sequence, 493 residues long: Glutamyl-tRNA(Gln) amidotransferase subunit A (493 aa).

Catalysis depends on charge relay system residues Lys-78 and Ser-158. Ser-182 serves as the catalytic Acyl-ester intermediate.

This sequence belongs to the amidase family. GatA subfamily. As to quaternary structure, heterotrimer of A, B and C subunits.

It catalyses the reaction L-glutamyl-tRNA(Gln) + L-glutamine + ATP + H2O = L-glutaminyl-tRNA(Gln) + L-glutamate + ADP + phosphate + H(+). Its function is as follows. Allows the formation of correctly charged Gln-tRNA(Gln) through the transamidation of misacylated Glu-tRNA(Gln) in organisms which lack glutaminyl-tRNA synthetase. The reaction takes place in the presence of glutamine and ATP through an activated gamma-phospho-Glu-tRNA(Gln). In Rickettsia conorii (strain ATCC VR-613 / Malish 7), this protein is Glutamyl-tRNA(Gln) amidotransferase subunit A.